A 148-amino-acid polypeptide reads, in one-letter code: Large ribosomal subunit protein uL15 (148 aa).

The segment at 1–61 (MELNELRPAV…GGQMPMQRRL (61 aa)) is disordered. A compositionally biased stretch (basic residues) spans 30–39 (TATKGHKGQK).

Belongs to the universal ribosomal protein uL15 family. Part of the 50S ribosomal subunit.

Its function is as follows. Binds to the 23S rRNA. The protein is Large ribosomal subunit protein uL15 of Geobacter sulfurreducens (strain ATCC 51573 / DSM 12127 / PCA).